We begin with the raw amino-acid sequence, 513 residues long: Carboxyethyl-arginine beta-lactam-synthase (513 aa).

Residues aspartate 253 and aspartate 351 each contribute to the Mg(2+) site.

This sequence belongs to the asparagine synthetase family. Homodimer. Mg(2+) is required as a cofactor.

The enzyme catalyses N(2)-(2-carboxyethyl)-L-arginine + ATP = deoxyamidinoproclavaminate + AMP + diphosphate + H(+). It participates in antibiotic biosynthesis; clavulanate biosynthesis; clavulanate from D-glyceraldehyde 3-phosphate and L-arginine: step 2/8. This Streptomyces clavuligerus protein is Carboxyethyl-arginine beta-lactam-synthase (bls).